The following is a 195-amino-acid chain: Neurturin (195 aa).

The signal sequence occupies residues 1–19 (MRRWKAAALVSLICSSLLS). Residues 20 to 95 (VWMCQEGLLL…RAGPRRRRAR (76 aa)) constitute a propeptide that is removed on maturation. Cystine bridges form between cysteine 101-cysteine 163, cysteine 128-cysteine 192, and cysteine 132-cysteine 194. Heparan sulfate group contacts are provided by arginine 147, arginine 156, and arginine 158.

It belongs to the TGF-beta family. GDNF subfamily. Homodimer; disulfide-linked. Interacts with GFRA2 coreceptor and RET: forms a 2:2:2 ternary complex composed of NRTN ligand, GFRA2 and RET receptor. Also forms a 4:4:4 tetrameric complex composed of 4 copies of NRTN ligand, GFRA2 and RET receptor, which prevents endocytosis of RET. Widespread distribution.

The protein localises to the secreted. In terms of biological role, growth factor that supports the survival of sympathetic neurons in culture. May regulate the development and maintenance of the CNS. Involved in the development of the neural crest. Might control the size of non-neuronal cell population such as haemopoietic cells. Acts by binding to its coreceptor, GFRA2, leading to autophosphorylation and activation of the RET receptor. Heparan sulfate-binding is required for signaling. In Mus musculus (Mouse), this protein is Neurturin (Nrtn).